The primary structure comprises 34 residues: MSDINTTCLPAWLATCPCTGDDVNPTLTCGESLC.

Residues 1–10 constitute a propeptide that is removed on maturation; that stretch reads MSDINTTCLP. Residues 11 to 17 constitute a cross-link (cyclopeptide (Ala-Pro)); it reads AWLATCP. Positions 12–16 form a cross-link, 2'-cysteinyl-6'-hydroxytryptophan sulfoxide (Trp-Cys); that stretch reads WLATC. A propeptide spanning residues 18-34 is cleaved from the precursor; that stretch reads CTGDDVNPTLTCGESLC.

This sequence belongs to the MSDIN fungal toxin family. In terms of processing, processed by the macrocyclase-peptidase enzyme POPB to yield a toxic cyclic heptapeptide. POPB first removes 10 residues from the N-terminus. Conformational trapping of the remaining peptide forces the enzyme to release this intermediate rather than proceed to macrocyclization. The enzyme rebinds the remaining peptide in a different conformation and catalyzes macrocyclization of the N-terminal 7 residues.

In terms of biological role, toxin that belongs to the bicyclic heptapeptides called phallotoxins. Although structurally related to amatoxins, phallotoxins have a different mode of action, which is the stabilization of F-actin. Phallotoxins are poisonous when administered parenterally, but not orally because of poor absorption. The sequence is that of Phalloidin proprotein from Amanita phalloides (Death cap).